We begin with the raw amino-acid sequence, 183 residues long: A-type ATP synthase subunit E (183 aa).

This sequence belongs to the V-ATPase E subunit family. As to quaternary structure, has multiple subunits with at least A(3), B(3), C, D, E, F, H, I and proteolipid K(x).

The protein localises to the cell membrane. Its function is as follows. Component of the A-type ATP synthase that produces ATP from ADP in the presence of a proton gradient across the membrane. The protein is A-type ATP synthase subunit E of Methanosarcina barkeri (strain Fusaro / DSM 804).